Consider the following 283-residue polypeptide: Bifunctional protein FolD (283 aa).

NADP(+) is bound at residue 166–168; that stretch reads GAS.

It belongs to the tetrahydrofolate dehydrogenase/cyclohydrolase family. In terms of assembly, homodimer.

It carries out the reaction (6R)-5,10-methylene-5,6,7,8-tetrahydrofolate + NADP(+) = (6R)-5,10-methenyltetrahydrofolate + NADPH. The catalysed reaction is (6R)-5,10-methenyltetrahydrofolate + H2O = (6R)-10-formyltetrahydrofolate + H(+). Its pathway is one-carbon metabolism; tetrahydrofolate interconversion. Catalyzes the oxidation of 5,10-methylenetetrahydrofolate to 5,10-methenyltetrahydrofolate and then the hydrolysis of 5,10-methenyltetrahydrofolate to 10-formyltetrahydrofolate. The chain is Bifunctional protein FolD from Coxiella burnetii (strain Dugway 5J108-111).